The primary structure comprises 598 residues: Membrane protein insertase YidC (598 aa).

The chain crosses the membrane as a helical span at residues 7–27 (NYFIAIALSVLIVLGWQFLYM). Residues 37 to 71 (AQEAQKAQQQTEQVQQPAAGGATPAPASGTAPSGQ) form a disordered region. Positions 40–71 (AQKAQQQTEQVQQPAAGGATPAPASGTAPSGQ) are enriched in low complexity. 4 consecutive transmembrane segments (helical) span residues 373-393 (FFGN…ALFF), 447-467 (WPVA…YITI), 492-512 (LFGL…WPLI), and 538-558 (WMPL…VIYW).

It belongs to the OXA1/ALB3/YidC family. Type 1 subfamily. In terms of assembly, interacts with the Sec translocase complex via SecD. Specifically interacts with transmembrane segments of nascent integral membrane proteins during membrane integration.

It is found in the cell inner membrane. In terms of biological role, required for the insertion and/or proper folding and/or complex formation of integral membrane proteins into the membrane. Involved in integration of membrane proteins that insert both dependently and independently of the Sec translocase complex, as well as at least some lipoproteins. Aids folding of multispanning membrane proteins. The protein is Membrane protein insertase YidC of Rhizobium etli (strain CIAT 652).